A 541-amino-acid chain; its full sequence is uncharacterized protein (541 aa).

Residues 1 to 55 (MTKTVTRAGGASGPQQFQSGGETMKYEITRRRFLAASSAVLAAPAIVTMVRPARA) constitute a signal peptide (tat-type signal). Residues 339–362 (RRSPSGISSPRSNRQPKAEALSAR) are disordered. Residues 341-351 (SPSGISSPRSN) are compositionally biased toward low complexity. Helical transmembrane passes span 379 to 399 (AIVWFARQVVIFSGIALMVFM), 420 to 440 (LPVLIFPWFILGGIVLAAHSG), 466 to 486 (LVSAGAFLMLGYQAYLVGEIA), and 500 to 520 (VGYFALAVGSVLVAIVTLAVA).

Belongs to the bacterial solute-binding protein 7 family. Predicted to be exported by the Tat system. The position of the signal peptide cleavage has not been experimentally proven.

It is found in the cell membrane. This is an uncharacterized protein from Sinorhizobium fredii (strain NBRC 101917 / NGR234).